Reading from the N-terminus, the 257-residue chain is 3-methyl-2-oxobutanoate hydroxymethyltransferase (257 aa).

The Mg(2+) site is built by Asp42 and Asp86. 3-methyl-2-oxobutanoate is bound by residues 42–43 (DS), Asp86, and Lys116. A Mg(2+)-binding site is contributed by Glu118. Glu185 (proton acceptor) is an active-site residue.

It belongs to the PanB family. In terms of assembly, homodecamer; pentamer of dimers. It depends on Mg(2+) as a cofactor.

The protein localises to the cytoplasm. The catalysed reaction is 3-methyl-2-oxobutanoate + (6R)-5,10-methylene-5,6,7,8-tetrahydrofolate + H2O = 2-dehydropantoate + (6S)-5,6,7,8-tetrahydrofolate. It functions in the pathway cofactor biosynthesis; (R)-pantothenate biosynthesis; (R)-pantoate from 3-methyl-2-oxobutanoate: step 1/2. Catalyzes the reversible reaction in which hydroxymethyl group from 5,10-methylenetetrahydrofolate is transferred onto alpha-ketoisovalerate to form ketopantoate. This Prochlorococcus marinus (strain AS9601) protein is 3-methyl-2-oxobutanoate hydroxymethyltransferase.